The following is a 430-amino-acid chain: Enolase (430 aa).

Residue glutamine 163 participates in (2R)-2-phosphoglycerate binding. Glutamate 205 serves as the catalytic Proton donor. 3 residues coordinate Mg(2+): aspartate 242, glutamate 287, and aspartate 314. Residues lysine 339, arginine 368, serine 369, and lysine 390 each coordinate (2R)-2-phosphoglycerate. Residue lysine 339 is the Proton acceptor of the active site.

It belongs to the enolase family. Mg(2+) is required as a cofactor.

It is found in the cytoplasm. It localises to the secreted. Its subcellular location is the cell surface. The enzyme catalyses (2R)-2-phosphoglycerate = phosphoenolpyruvate + H2O. It participates in carbohydrate degradation; glycolysis; pyruvate from D-glyceraldehyde 3-phosphate: step 4/5. Functionally, catalyzes the reversible conversion of 2-phosphoglycerate (2-PG) into phosphoenolpyruvate (PEP). It is essential for the degradation of carbohydrates via glycolysis. This chain is Enolase, found in Geobacillus kaustophilus (strain HTA426).